A 372-amino-acid chain; its full sequence is Mitogen-activated protein kinase kinase kinase 17 (372 aa).

Residues 3 to 259 (WTRGRILGRG…ATQLLNHPFL (257 aa)) form the Protein kinase domain. Residues 9-17 (LGRGSTATV) and Lys32 each bind ATP. Residue Asp126 is the Proton acceptor of the active site. Phosphoserine is present on Ser312.

This sequence belongs to the protein kinase superfamily. Ser/Thr protein kinase family. In terms of assembly, binds to MKK3.

The protein localises to the nucleus. It catalyses the reaction L-seryl-[protein] + ATP = O-phospho-L-seryl-[protein] + ADP + H(+). The catalysed reaction is L-threonyl-[protein] + ATP = O-phospho-L-threonyl-[protein] + ADP + H(+). Its function is as follows. Component of the abscisic acid (ABA) signaling pathway that may act as ABA signal transducer in the context of abiotic stresses. Triggers MPK7 activation in a MKK3-dependent manner. Mediates the ABA-dependent activation of the MKK3-MPK7 module. The protein is Mitogen-activated protein kinase kinase kinase 17 of Arabidopsis thaliana (Mouse-ear cress).